The primary structure comprises 699 residues: Polyribonucleotide nucleotidyltransferase (699 aa).

Residues D485 and D491 each coordinate Mg(2+). Residues 552 to 611 form the KH domain; that stretch reads PRITTIKINPEKIRDVIGKGGAVIRALTEETGTTIELEDDGTVKIASSNGEATKEAIRRI. Positions 621–689 constitute an S1 motif domain; it reads GRIYNGKVIR…RQGRVRLSIK (69 aa).

It belongs to the polyribonucleotide nucleotidyltransferase family. Component of the RNA degradosome, which is a multiprotein complex involved in RNA processing and mRNA degradation. Mg(2+) is required as a cofactor.

Its subcellular location is the cytoplasm. The enzyme catalyses RNA(n+1) + phosphate = RNA(n) + a ribonucleoside 5'-diphosphate. Its function is as follows. Involved in mRNA degradation. Catalyzes the phosphorolysis of single-stranded polyribonucleotides processively in the 3'- to 5'-direction. The chain is Polyribonucleotide nucleotidyltransferase from Shewanella oneidensis (strain ATCC 700550 / JCM 31522 / CIP 106686 / LMG 19005 / NCIMB 14063 / MR-1).